Consider the following 295-residue polypeptide: Light-independent protochlorophyllide reductase iron-sulfur ATP-binding protein (295 aa).

ATP-binding positions include 39–44 (GIGKST) and Lys-68. Ser-43 serves as a coordination point for Mg(2+). Residues Cys-124 and Cys-158 each contribute to the [4Fe-4S] cluster site. Position 209 to 210 (209 to 210 (NR)) interacts with ATP.

This sequence belongs to the NifH/BchL/ChlL family. As to quaternary structure, homodimer. Protochlorophyllide reductase is composed of three subunits; ChlL, ChlN and ChlB. Requires [4Fe-4S] cluster as cofactor.

The catalysed reaction is chlorophyllide a + oxidized 2[4Fe-4S]-[ferredoxin] + 2 ADP + 2 phosphate = protochlorophyllide a + reduced 2[4Fe-4S]-[ferredoxin] + 2 ATP + 2 H2O. It functions in the pathway porphyrin-containing compound metabolism; chlorophyll biosynthesis (light-independent). Functionally, component of the dark-operative protochlorophyllide reductase (DPOR) that uses Mg-ATP and reduced ferredoxin to reduce ring D of protochlorophyllide (Pchlide) to form chlorophyllide a (Chlide). This reaction is light-independent. The L component serves as a unique electron donor to the NB-component of the complex, and binds Mg-ATP. This chain is Light-independent protochlorophyllide reductase iron-sulfur ATP-binding protein, found in Prochlorococcus marinus (strain MIT 9515).